The primary structure comprises 334 residues: MAFNMKNRHLLSLVHHTEREIKYLLDLSRDLKRAKYAGTEQQKLKGKNIALIFEKTSTRTRCAFEVAAYDQGAQVTYIDPNSSQIGHKESMKDTARVLGRMYDGIEYRGFKQSIVQELADYAGVPVFNGLTDEFHPTQMLADVLTMIEHCDKPLSEISYVYIGDARNNMGNSLLLIGAKLGMDVRICGPKALLPEANLVEMCEKFAKESGARITVTEDIDKAVKGVDFIHTDVWVSMGEPLETWGERIKLLLPYQVTPELMKRTGNPKVKFMHCLPAFHNSETKVGRQIAEKYPELANGIEVTEEVFESPMNIAFEQAENRMHTIKAVMVASLA.

Carbamoyl phosphate is bound by residues 57–60 (STRT), Gln-84, Arg-108, and 135–138 (HPTQ). L-ornithine is bound by residues Asn-168, Asp-232, and 236-237 (SM). Residues 274 to 275 (CL) and Arg-321 each bind carbamoyl phosphate.

This sequence belongs to the aspartate/ornithine carbamoyltransferase superfamily. OTCase family.

It localises to the cytoplasm. It carries out the reaction carbamoyl phosphate + L-ornithine = L-citrulline + phosphate + H(+). It participates in amino-acid degradation; L-arginine degradation via ADI pathway; carbamoyl phosphate from L-arginine: step 2/2. In terms of biological role, reversibly catalyzes the transfer of the carbamoyl group from carbamoyl phosphate (CP) to the N(epsilon) atom of ornithine (ORN) to produce L-citrulline. This is Ornithine carbamoyltransferase, catabolic (arcB) from Haemophilus influenzae (strain ATCC 51907 / DSM 11121 / KW20 / Rd).